The chain runs to 404 residues: WD repeat and SOCS box-containing protein 2 (404 aa).

5 WD repeats span residues Pro105–Asn148, Gly151–Gln191, Gly195–Lys234, Gly237–Ser276, and Val291–Phe330. The 49-residue stretch at His356–Phe404 folds into the SOCS box domain.

Its pathway is protein modification; protein ubiquitination. May be a substrate-recognition component of a SCF-like ECS (Elongin-Cullin-SOCS-box protein) E3 ubiquitin ligase complex which mediates the ubiquitination and subsequent proteasomal degradation of target proteins. This Mus musculus (Mouse) protein is WD repeat and SOCS box-containing protein 2 (Wsb2).